The sequence spans 446 residues: Probable carboxylesterase 16 (446 aa).

Positions 84 to 131 (PEPDSLRHKDNYNHQPRSDRRHSYGPNHNSPAPAERNESRRNSYGCNN) are disordered. Basic and acidic residues predominate over residues 87–105 (DSLRHKDNYNHQPRSDRRH). The short motif at 158-160 (HGG) is the Involved in the stabilization of the negatively charged intermediate by the formation of the oxyanion hole element. Active-site residues include S274, D378, and H408.

This sequence belongs to the 'GDXG' lipolytic enzyme family. In terms of tissue distribution, expressed in roots, leaves, stems, flowers and siliques.

It carries out the reaction a carboxylic ester + H2O = an alcohol + a carboxylate + H(+). Its function is as follows. Carboxylesterase acting on esters with varying acyl chain length. The sequence is that of Probable carboxylesterase 16 (CXE16) from Arabidopsis thaliana (Mouse-ear cress).